A 1127-amino-acid polypeptide reads, in one-letter code: Caprin-2 (1127 aa).

Residues 67 to 108 (YQSPSGHSEEEREGNMKSAKPQVNHSQHGESQRALSPLQSTL) are disordered. Over residues 99-108 (RALSPLQSTL) the composition is skewed to polar residues. Coiled-coil stretches lie at residues 129–156 (LKHK…GEHL) and 194–216 (AQKK…KLRT). Disordered stretches follow at residues 382 to 614 (NKQG…KDPV), 642 to 753 (DKPS…SSSV), and 922 to 975 (QCYK…PVDV). Basic and acidic residues-rich tracts occupy residues 402–432 (KRWD…HQEV) and 440–464 (EQRK…EISK). 2 stretches are compositionally biased toward polar residues: residues 512–531 (PKSW…SWTT) and 544–567 (TPKS…QISP). Residues 588 to 597 (LNTEPKDVPK) are compositionally biased toward basic and acidic residues. Polar residues-rich tracts occupy residues 665-714 (KEQN…TSET) and 741-753 (QGFQ…SSSV). Phosphoserine is present on residues Ser948 and Ser949. Residues 956-970 (TFNSGDSGQGDSRSM) are compositionally biased toward polar residues. The 135-residue stretch at 993 to 1127 (PQQMRVAFSA…TFSGYLLYQD (135 aa)) folds into the C1q domain. Ca(2+) contacts are provided by Asp1078 and Glu1084.

The protein belongs to the caprin family. In terms of assembly, homotrimer; via C1q domain. Found in a complex with LRP6, CCNY and CDK14 during G2/M stage; CAPRIN2 functions as a scaffold for the complex by binding to CCNY via its N terminus and to CDK14 via its C terminus. Interacts with LRP5. Interacts with LRP6. Detected in all tissues tested with highest levels of expression in brain and spleen.

The protein resides in the cytoplasm. The protein localises to the mitochondrion. It is found in the cell membrane. In terms of biological role, promotes phosphorylation of the Wnt coreceptor LRP6, leading to increased activity of the canonical Wnt signaling pathway. Facilitates constitutive LRP6 phosphorylation by CDK14/CCNY during G2/M stage of the cell cycle, which may potentiate cells for Wnt signaling. May regulate the transport and translation of mRNAs, modulating for instance the expression of proteins involved in synaptic plasticity in neurons. Involved in regulation of growth as erythroblasts shift from a highly proliferative state towards their terminal phase of differentiation. May be involved in apoptosis. The protein is Caprin-2 of Homo sapiens (Human).